We begin with the raw amino-acid sequence, 146 residues long: Single-stranded DNA-binding protein, mitochondrial (146 aa).

The transit peptide at 1–16 (MLRNASAQILKQFVRH) directs the protein to the mitochondrion. Residues 29–140 (INKVQILGRV…IIADNIVFLS (112 aa)) form the SSB domain.

The protein resides in the mitochondrion. Its subcellular location is the mitochondrion matrix. It is found in the mitochondrion nucleoid. Functionally, binds preferentially and cooperatively to pyrimidine rich single-stranded DNA (ss-DNA). May be required to maintain the copy number of mitochondrial DNA (mtDNA) and play a crucial role during mtDNA replication. Required for retinal ganglion cell differentiation and retinal integrity. The sequence is that of Single-stranded DNA-binding protein, mitochondrial from Danio rerio (Zebrafish).